The primary structure comprises 652 residues: Threonine--tRNA ligase (652 aa).

In terms of domain architecture, TGS spans 1–61 (MIKLKLPDGS…DRDAEVEIVT (61 aa)). The segment at 243 to 548 (DHRKIGREMD…LIENYEGRFP (306 aa)) is catalytic. Zn(2+) contacts are provided by Cys348, His399, and His525.

The protein belongs to the class-II aminoacyl-tRNA synthetase family. Homodimer. The cofactor is Zn(2+).

The protein resides in the cytoplasm. The catalysed reaction is tRNA(Thr) + L-threonine + ATP = L-threonyl-tRNA(Thr) + AMP + diphosphate + H(+). Functionally, catalyzes the attachment of threonine to tRNA(Thr) in a two-step reaction: L-threonine is first activated by ATP to form Thr-AMP and then transferred to the acceptor end of tRNA(Thr). Also edits incorrectly charged L-seryl-tRNA(Thr). The protein is Threonine--tRNA ligase of Parvibaculum lavamentivorans (strain DS-1 / DSM 13023 / NCIMB 13966).